The sequence spans 319 residues: Sliding-clamp-loader large subunit (319 aa).

Residues 12–15 (EQKY), I24, 53–58 (GTGKTT), and R205 each bind ATP.

It belongs to the Tevenvirinae sliding-clamp-loader large subunit family. As to quaternary structure, the sliding-clamp-loader consists of 4 large subunits and 1 small subunit. Interacts with the sliding clamp; this interaction allows the sliding-clamp-loader to open the sliding clamp. Part of the replicase complex that includes the DNA polymerase, the polymerase clamp, the clamp loader complex, the single-stranded DNA binding protein, the primase, the helicase and the helicase assembly factor.

In terms of biological role, forms the sliding-clamp-loader together with the small subunit. Functions as an ATPase enzyme. The clamp loader holds the clamp in an open conformation and places it onto the DNA. 4 ATP molecules must bind to the sliding-clamp-loader before the latter can open the sliding clamp. ATP hydrolysis triggers the detachment of the sliding clamp from the sliding-clamp-loader, freeing the sliding clamp to track along DNA. This is Sliding-clamp-loader large subunit (44) from Enterobacteria phage T4 (Bacteriophage T4).